The sequence spans 2073 residues: Dedicator of cytokinesis protein 11 (2073 aa).

The residue at position 12 (Ser-12) is a Phosphoserine. Thr-16 is modified (phosphothreonine). Phosphoserine is present on residues Ser-23 and Ser-161. Residues 165 to 272 (GVIKQGWLHK…WLITLKKIIQ (108 aa)) form the PH domain. Tyr-248 carries the phosphotyrosine modification. 3 positions are modified to phosphoserine: Ser-306, Ser-440, and Ser-445. The C2 DOCK-type domain occupies 640–818 (KNHLYVYPLQ…PLLKIKSHLE (179 aa)). Residues 1226-1267 (FQNGHGIKREDSRGSLIPEGATGFPDQGNTGENTRQSSTRSS) form a disordered region. A phosphoserine mark is found at Ser-1237 and Ser-1240. One can recognise a DOCKER domain in the interval 1609–2036 (KSYASTPELR…LSDIIHEQIL (428 aa)).

The protein belongs to the DOCK family. Interacts with CDC42.

In terms of biological role, guanine nucleotide-exchange factor (GEF) that activates CDC42 by exchanging bound GDP for free GTP. Required for marginal zone (MZ) B-cell development, is associated with early bone marrow B-cell development, MZ B-cell formation, MZ B-cell number and marginal metallophilic macrophages morphology. Facilitates filopodia formation through the activation of CDC42. This is Dedicator of cytokinesis protein 11 from Homo sapiens (Human).